The sequence spans 193 residues: CASP-like protein 2D1 (193 aa).

The disordered stretch occupies residues 1-24 (MRANNNNTREEERSSSSKQQQPQA). The Cytoplasmic segment spans residues 1-29 (MRANNNNTREEERSSSSKQQQPQAHMSLK). Residues 30–50 (IIDSCLRLSVVPLSVATIWLT) traverse the membrane as a helical segment. The Extracellular portion of the chain corresponds to 51–73 (VTNHESNPDYGNLDYNSIMGLKY). The chain crosses the membrane as a helical span at residues 74–94 (MVGVSAISAIYALLSTISLWV). Topologically, residues 95–109 (TCLVSKAWLFFVPDQ) are cytoplasmic. Residues 110–132 (VLAYVMTTSVAGATEIVYLLNKG) form a helical membrane-spanning segment. At 133 to 151 (DKIVTWSEMCSSYPHYCSK) the chain is on the extracellular side. A helical transmembrane segment spans residues 152-172 (LTIALGLHVFVLFFFLFLSVI). Residues 173-193 (SAYRAFSPFDPPCDSQTNIDA) are Cytoplasmic-facing.

Belongs to the Casparian strip membrane proteins (CASP) family. Homodimer and heterodimers.

Its subcellular location is the cell membrane. In Arabidopsis lyrata subsp. lyrata (Lyre-leaved rock-cress), this protein is CASP-like protein 2D1.